A 251-amino-acid chain; its full sequence is Large ribosomal subunit protein uL2 (251 aa).

The span at 1 to 12 shows a compositional bias: basic residues; it reads MGKRLRVQRHGR. Residues 1–22 are disordered; the sequence is MGKRLRVQRHGRGTPQWRNRGH.

It belongs to the universal ribosomal protein uL2 family. In terms of assembly, part of the 50S ribosomal subunit. Forms a bridge to the 30S subunit in the 70S ribosome.

One of the primary rRNA binding proteins. Required for association of the 30S and 50S subunits to form the 70S ribosome, for tRNA binding and peptide bond formation. It has been suggested to have peptidyltransferase activity; this is somewhat controversial. Makes several contacts with the 16S rRNA in the 70S ribosome. This is Large ribosomal subunit protein uL2 from Ignicoccus hospitalis (strain KIN4/I / DSM 18386 / JCM 14125).